The following is a 700-amino-acid chain: ATP-dependent zinc metalloprotease FtsH (700 aa).

Topologically, residues 1–10 are cytoplasmic; it reads MNNNKGGFLR. The chain crosses the membrane as a helical span at residues 11–31; the sequence is SSVFYIFIFLAVVGMVYGLFG. Topologically, residues 32-130 are extracellular; it reads NDKTTTKTIT…LVTKQAENSG (99 aa). Residues 131–151 form a helical membrane-spanning segment; that stretch reads FWLNLLVSLVPVLLIVAVFYL. At 152–700 the chain is on the cytoplasmic side; that stretch reads MMNQAGGGKG…ETDDNNTENK (549 aa). 227 to 234 is a binding site for ATP; it reads GPPGTGKT. His-449 is a binding site for Zn(2+). The active site involves Glu-450. Zn(2+) contacts are provided by His-453 and Asp-525. The tract at residues 644-700 is disordered; it reads KSFEEAKAAADAKDSQAEQRFEKQDEEKSSDDHSESKNEDTDSTDKSETDDNNTENK.

This sequence in the central section; belongs to the AAA ATPase family. It in the C-terminal section; belongs to the peptidase M41 family. Homohexamer. It depends on Zn(2+) as a cofactor.

It is found in the cell membrane. Acts as a processive, ATP-dependent zinc metallopeptidase for both cytoplasmic and membrane proteins. Plays a role in the quality control of integral membrane proteins. In Leuconostoc mesenteroides subsp. mesenteroides (strain ATCC 8293 / DSM 20343 / BCRC 11652 / CCM 1803 / JCM 6124 / NCDO 523 / NBRC 100496 / NCIMB 8023 / NCTC 12954 / NRRL B-1118 / 37Y), this protein is ATP-dependent zinc metalloprotease FtsH.